Consider the following 220-residue polypeptide: Metalloproteinase inhibitor 2 (220 aa).

The N-terminal stretch at 1–26 is a signal peptide; that stretch reads MPGAALPSLLAWLAVLLLGRARPADA. Cys-27 contacts Zn(2+). 2 involved in metalloproteinase-binding regions span residues 27–30 and 95–96; these read CSCS and TE. 6 disulfide bridges follow: Cys-27/Cys-98, Cys-29/Cys-127, Cys-39/Cys-152, Cys-154/Cys-201, Cys-159/Cys-164, and Cys-172/Cys-193. The NTR domain maps to 27–152; sequence CSCSPIHPQQ…SLNQRYQMGC (126 aa).

Belongs to the protease inhibitor I35 (TIMP) family. The activity of TIMP2 is dependent on the presence of disulfide bonds.

The protein localises to the secreted. In terms of biological role, complexes with metalloproteinases (such as collagenases) and irreversibly inactivates them by binding to their catalytic zinc cofactor. This chain is Metalloproteinase inhibitor 2 (TIMP2), found in Gallus gallus (Chicken).